The primary structure comprises 275 residues: F420-dependent methylenetetrahydromethanopterin dehydrogenase (275 aa).

The protein belongs to the MTD family.

It carries out the reaction 5,10-methylenetetrahydromethanopterin + oxidized coenzyme F420-(gamma-L-Glu)(n) + 2 H(+) = 5,10-methenyl-5,6,7,8-tetrahydromethanopterin + reduced coenzyme F420-(gamma-L-Glu)(n). It functions in the pathway one-carbon metabolism; methanogenesis from CO(2); 5,10-methylene-5,6,7,8-tetrahydromethanopterin from 5,10-methenyl-5,6,7,8-tetrahydromethanopterin (coenzyme F420 route): step 1/1. Functionally, catalyzes the reversible reduction of methenyl-H(4)MPT(+) to methylene-H(4)MPT. The chain is F420-dependent methylenetetrahydromethanopterin dehydrogenase from Methanobrevibacter smithii (strain ATCC 35061 / DSM 861 / OCM 144 / PS).